A 152-amino-acid chain; its full sequence is Large ribosomal subunit protein uL15 (152 aa).

Residues 1-54 (MGLKLNELSPGVGAKKTAHRKGRGIGSGLGKTGGRGVKGQKSRSGSGVRRGFEG) are disordered. Residues 24–37 (GIGSGLGKTGGRGV) are compositionally biased toward gly residues.

Belongs to the universal ribosomal protein uL15 family. Part of the 50S ribosomal subunit.

Its function is as follows. Binds to the 23S rRNA. This chain is Large ribosomal subunit protein uL15, found in Psychrobacter sp. (strain PRwf-1).